Consider the following 131-residue polypeptide: Conotoxin Cal8.2 (131 aa).

Residues 1–19 (MKLLLTLLLGSALMCITLA) form the signal peptide. Residues 20-38 (DECGLGTHRPVKEVIDNVR) constitute a propeptide that is removed on maturation.

In terms of processing, contains 4 disulfide bonds. As to expression, expressed by the venom duct.

It localises to the secreted. Its function is as follows. Probable neurotoxin with unknown target. Possibly targets ion channels. This is Conotoxin Cal8.2 from Californiconus californicus (California cone).